Reading from the N-terminus, the 621-residue chain is UvrABC system protein C (621 aa).

In terms of domain architecture, GIY-YIG spans 20 to 98 (TAPGVYRMYA…IKSLTPRYNV (79 aa)). One can recognise a UVR domain in the interval 207-242 (DLLAEELIQAMQVASEHLEFEQAARLRDLLTSLRSM).

It belongs to the UvrC family. Interacts with UvrB in an incision complex.

It localises to the cytoplasm. Functionally, the UvrABC repair system catalyzes the recognition and processing of DNA lesions. UvrC both incises the 5' and 3' sides of the lesion. The N-terminal half is responsible for the 3' incision and the C-terminal half is responsible for the 5' incision. This is UvrABC system protein C from Xylella fastidiosa (strain M23).